Here is a 397-residue protein sequence, read N- to C-terminus: Tryptophan synthase beta chain (397 aa).

N6-(pyridoxal phosphate)lysine is present on lysine 86.

It belongs to the TrpB family. In terms of assembly, tetramer of two alpha and two beta chains. Requires pyridoxal 5'-phosphate as cofactor.

It carries out the reaction (1S,2R)-1-C-(indol-3-yl)glycerol 3-phosphate + L-serine = D-glyceraldehyde 3-phosphate + L-tryptophan + H2O. It functions in the pathway amino-acid biosynthesis; L-tryptophan biosynthesis; L-tryptophan from chorismate: step 5/5. Functionally, the beta subunit is responsible for the synthesis of L-tryptophan from indole and L-serine. This chain is Tryptophan synthase beta chain, found in Edwardsiella ictaluri (strain 93-146).